A 423-amino-acid chain; its full sequence is Acaloleptin A (423 aa).

The signal sequence occupies residues 1–17; that stretch reads MITKISLILFAVLLVSG. A propeptide spanning residues 18–26 is cleaved from the precursor; sequence LEEEERWKR. 4 disordered regions span residues 28-58, 108-128, 180-203, and 355-385; these read LQPG…NTKT, INNK…DNGN, NVNN…GNTR, and SDDE…TRAD. Polar residues predominate over residues 34-43; sequence NVNNNDQPWQ. Polar residues predominate over residues 180-189; sequence NVNNKDQPWQ. Residues 357 to 366 are compositionally biased toward acidic residues; the sequence is DEDEEEEEDQ. The segment covering 376 to 385 has biased composition (basic and acidic residues); that stretch reads RGDDGNTRAD.

It belongs to the coleoptericin family. As to expression, hemolymph (at protein level). Larval fat body.

Its subcellular location is the secreted. Its function is as follows. Acaloleptins A1-A4 show antibacterial activity against Gram-negative bacteria but not against Gram-positive bacteria. Acaloleptin A5 shows antibacterial activity against Gram-positive bacteria but not against Gram-negative bacteria, and may also have antifungal activity. This chain is Acaloleptin A, found in Acalolepta luxuriosa (Udo longhorn beetle).